Consider the following 293-residue polypeptide: 4-hydroxy-tetrahydrodipicolinate synthase (293 aa).

Thr-45 contributes to the pyruvate binding site. The active-site Proton donor/acceptor is Tyr-133. Catalysis depends on Lys-161, which acts as the Schiff-base intermediate with substrate. Residue Ile-204 participates in pyruvate binding.

It belongs to the DapA family. As to quaternary structure, homotetramer; dimer of dimers.

It localises to the cytoplasm. It catalyses the reaction L-aspartate 4-semialdehyde + pyruvate = (2S,4S)-4-hydroxy-2,3,4,5-tetrahydrodipicolinate + H2O + H(+). It participates in amino-acid biosynthesis; L-lysine biosynthesis via DAP pathway; (S)-tetrahydrodipicolinate from L-aspartate: step 3/4. In terms of biological role, catalyzes the condensation of (S)-aspartate-beta-semialdehyde [(S)-ASA] and pyruvate to 4-hydroxy-tetrahydrodipicolinate (HTPA). In Yersinia pseudotuberculosis serotype O:1b (strain IP 31758), this protein is 4-hydroxy-tetrahydrodipicolinate synthase.